We begin with the raw amino-acid sequence, 361 residues long: Deoxyhypusine hydroxylase (361 aa).

HEAT-like PBS-type repeat units follow at residues 59 to 85 (LKHELAYVLGQLLNTRALPTLSRVLEN), 94 to 120 (VRHEAAEALGAIGAEESLPILRKYMQD), 183 to 211 (QRYRAMFALRDFGAGSKEAVEALADGFRD), and 216 to 242 (FRHEIAYIFGQLSSPYSIPSLLSRLRD). 4 residues coordinate Fe cation: His-61, Glu-62, His-96, and Glu-97. The Fe cation site is built by His-218, Glu-219, His-251, and Glu-252.

The protein belongs to the deoxyhypusine hydroxylase family. The cofactor is Fe(2+).

The protein resides in the cytoplasm. Its subcellular location is the nucleus. It carries out the reaction [eIF5A protein]-deoxyhypusine + AH2 + O2 = [eIF5A protein]-hypusine + A + H2O. It functions in the pathway protein modification; eIF5A hypusination. In terms of biological role, catalyzes the hydroxylation of the N(6)-(4-aminobutyl)-L-lysine intermediate to form hypusine, an essential post-translational modification only found in mature eIF-5A factor. In Cryptococcus neoformans var. neoformans serotype D (strain JEC21 / ATCC MYA-565) (Filobasidiella neoformans), this protein is Deoxyhypusine hydroxylase.